The primary structure comprises 196 residues: S-norcoclaurine synthase 2 (196 aa).

An N-terminal signal peptide occupies residues 1–19; it reads MRMEVVLVVFLMFIGTINC. 104-106 serves as a coordination point for dopamine; the sequence is YRE. Residue Lys-118 is the Proton donor of the active site. Asp-137 is a binding site for (4-hydroxyphenyl)acetaldehyde.

This sequence belongs to the BetVI family.

It carries out the reaction (4-hydroxyphenyl)acetaldehyde + dopamine = (S)-norcoclaurine + H2O. Its activity is regulated as follows. Not inhibited by O-phenanthroline or EDTA. Functionally, involved in the biosynthesis of the common precursor of all benzylisoquinoline alkaloids such as morphine, sanguinarine, codeine or berberine. Condenses dopamine and pyruvic acid or 4-hydroxyphenylpyruvate. The sequence is that of S-norcoclaurine synthase 2 (PR10A) from Coptis japonica (Japanese goldthread).